Consider the following 119-residue polypeptide: Ribonuclease P protein component (119 aa).

Belongs to the RnpA family. As to quaternary structure, consists of a catalytic RNA component (M1 or rnpB) and a protein subunit.

The enzyme catalyses Endonucleolytic cleavage of RNA, removing 5'-extranucleotides from tRNA precursor.. RNaseP catalyzes the removal of the 5'-leader sequence from pre-tRNA to produce the mature 5'-terminus. It can also cleave other RNA substrates such as 4.5S RNA. The protein component plays an auxiliary but essential role in vivo by binding to the 5'-leader sequence and broadening the substrate specificity of the ribozyme. The chain is Ribonuclease P protein component from Bacillus cereus (strain ATCC 14579 / DSM 31 / CCUG 7414 / JCM 2152 / NBRC 15305 / NCIMB 9373 / NCTC 2599 / NRRL B-3711).